The following is a 241-amino-acid chain: Glutamate/aspartate import ATP-binding protein GltL (241 aa).

Residues 2-236 (ITLKNVSKWY…PKSDRAKDFL (235 aa)) enclose the ABC transporter domain. Position 34 to 41 (34 to 41 (GPSGSGKS)) interacts with ATP.

It belongs to the ABC transporter superfamily. The complex is composed of two ATP-binding proteins (GltL), two transmembrane proteins (GltJ and GltK) and a solute-binding protein (GltI).

The protein localises to the cell inner membrane. The catalysed reaction is a polar amino acid(out) + ATP + H2O = a polar amino acid(in) + ADP + phosphate + H(+). The enzyme catalyses L-glutamate(out) + ATP + H2O = L-glutamate(in) + ADP + phosphate + H(+). It catalyses the reaction L-aspartate(out) + ATP + H2O = L-aspartate(in) + ADP + phosphate + H(+). In terms of biological role, part of the ABC transporter complex GltIJKL involved in glutamate and aspartate uptake. Probably responsible for energy coupling to the transport system. The polypeptide is Glutamate/aspartate import ATP-binding protein GltL (gltL) (Escherichia coli O157:H7).